The chain runs to 174 residues: Larval cuticle protein A1A (174 aa).

2 tandem repeats follow at residues 45–48 and 67–70. Residues 84–150 form the Chitin-binding type R&amp;R domain; it reads NPQYSFGYDV…AVVHREPLVA (67 aa). Repeat unit 3 spans residues 155-158; sequence AAPA.

Its function is as follows. Component of the cuticle of the larva of Tenebrio molitor. This Tenebrio molitor (Yellow mealworm beetle) protein is Larval cuticle protein A1A.